The following is a 431-amino-acid chain: Serine/threonine-protein kinase Sgk1 (431 aa).

Residues 1 to 60 (MTVKAEAARSTLTYSRMRGMVAILIAFMKQRRMGLNDFIQKIASNTYACKHAEVQSILKM) form a necessary for localization to the mitochondria region. The disordered stretch occupies residues 65-92 (EPELMNANPSPPPSPSQQINLGPSSNPH). At serine 74 the chain carries Phosphoserine. At serine 78 the chain carries Phosphoserine; by MAPK7. A compositionally biased stretch (polar residues) spans 81–91 (QQINLGPSSNP). Positions 98–355 (FHFLKVIGKG…FMEIKSHIFF (258 aa)) constitute a Protein kinase domain. Residues 104–112 (IGKGSFGKV) and lysine 127 each bind ATP. The Nuclear localization signal motif lies at 131-141 (KKAILKKKEEK). Catalysis depends on aspartate 222, which acts as the Proton acceptor. Position 256 is a phosphothreonine; by PDPK1 (threonine 256). An AGC-kinase C-terminal domain is found at 356–431 (SLINWDDLIN…SYAPPVDSFL (76 aa)). Threonine 369 carries the phosphothreonine; by PKA modification. A phosphoserine mark is found at serine 397, serine 401, and serine 422.

The protein belongs to the protein kinase superfamily. AGC Ser/Thr protein kinase family. Homodimer; disulfide-linked. Interacts with MAPK3/ERK1, MAPK1/ERK2, MAP2K1/MEK1, MAP2K2/MEK2, NEDD4, NEDD4L, MAPT/TAU, MAPK7, CREB1, SLC9A3R2/NHERF2 and KCNJ1/ROMK1. Forms a trimeric complex with FBXW7 and NOTCH1 Associates with the mammalian target of rapamycin complex 2 (mTORC2) via an interaction with MAPKAP1/SIN1. Post-translationally, regulated by phosphorylation. Activated by phosphorylation on Ser-422 by mTORC2, transforming it into a substrate for PDPK1 which phosphorylates it on Thr-256. Phosphorylation on Ser-397 and Ser-401 are also essential for its activity. Phosphorylation on Ser-78 by MAPK7 is required for growth factor-induced cell cycle progression. In terms of processing, ubiquitinated by NEDD4L; which promotes proteasomal degradation. Ubiquitinated by SYVN1 at the endoplasmic reticulum; which promotes rapid proteasomal degradation and maintains a high turnover rate in resting cells.

It is found in the cytoplasm. The protein localises to the nucleus. It localises to the endoplasmic reticulum membrane. The protein resides in the cell membrane. Its subcellular location is the mitochondrion. The enzyme catalyses L-seryl-[protein] + ATP = O-phospho-L-seryl-[protein] + ADP + H(+). The catalysed reaction is L-threonyl-[protein] + ATP = O-phospho-L-threonyl-[protein] + ADP + H(+). With respect to regulation, two specific sites, one in the kinase domain (Thr-256) and the other in the C-terminal regulatory region (Ser-422), need to be phosphorylated for its full activation. Phosphorylation at Ser-397 and Ser-401 are also essential for its activity. Activated by WNK1, WNK2, WNK3 and WNK4; which promote phosphorylation by mTORC2. Its function is as follows. Serine/threonine-protein kinase which is involved in the regulation of a wide variety of ion channels, membrane transporters, cellular enzymes, transcription factors, neuronal excitability, cell growth, proliferation, survival, migration and apoptosis. Plays an important role in cellular stress response. Contributes to regulation of renal Na(+) retention, renal K(+) elimination, salt appetite, gastric acid secretion, intestinal Na(+)/H(+) exchange and nutrient transport, insulin-dependent salt sensitivity of blood pressure, salt sensitivity of peripheral glucose uptake, cardiac repolarization and memory consolidation. Up-regulates Na(+) channels: SCNN1A/ENAC, SCN5A and ASIC1/ACCN2, K(+) channels: KCNJ1/ROMK1, KCNA1-5, KCNQ1-5 and KCNE1, epithelial Ca(2+) channels: TRPV5 and TRPV6, chloride channels: BSND, CLCN2 and CFTR, glutamate transporters: SLC1A3/EAAT1, SLC1A2 /EAAT2, SLC1A1/EAAT3, SLC1A6/EAAT4 and SLC1A7/EAAT5, amino acid transporters: SLC1A5/ASCT2, SLC38A1/SN1 and SLC6A19, creatine transporter: SLC6A8, Na(+)/dicarboxylate cotransporter: SLC13A2/NADC1, Na(+)-dependent phosphate cotransporter: SLC34A2/NAPI-2B, glutamate receptor: GRIK2/GLUR6. Up-regulates carriers: SLC9A3/NHE3, SLC12A1/NKCC2, SLC12A3/NCC, SLC5A3/SMIT, SLC2A1/GLUT1, SLC5A1/SGLT1 and SLC15A2/PEPT2. Regulates enzymes: GSK3A/B, PMM2 and Na(+)/K(+) ATPase, and transcription factors: CTNNB1 and nuclear factor NF-kappa-B. Stimulates sodium transport into epithelial cells by enhancing the stability and expression of SCNN1A/ENAC. This is achieved by phosphorylating the NEDD4L ubiquitin E3 ligase, promoting its interaction with 14-3-3 proteins, thereby preventing it from binding to SCNN1A/ENAC and targeting it for degradation. Regulates store-operated Ca(+2) entry (SOCE) by stimulating ORAI1 and STIM1. Regulates KCNJ1/ROMK1 directly via its phosphorylation or indirectly via increased interaction with SLC9A3R2/NHERF2. Phosphorylates MDM2 and activates MDM2-dependent ubiquitination of p53/TP53. Phosphorylates MAPT/TAU and mediates microtubule depolymerization and neurite formation in hippocampal neurons. Phosphorylates SLC2A4/GLUT4 and up-regulates its activity. Phosphorylates APBB1/FE65 and promotes its localization to the nucleus. Phosphorylates MAPK1/ERK2 and activates it by enhancing its interaction with MAP2K1/MEK1 and MAP2K2/MEK2. Phosphorylates FBXW7 and plays an inhibitory role in the NOTCH1 signaling. Phosphorylates FOXO1 resulting in its relocalization from the nucleus to the cytoplasm. Phosphorylates FOXO3, promoting its exit from the nucleus and interference with FOXO3-dependent transcription. Phosphorylates BRAF and MAP3K3/MEKK3 and inhibits their activity. Phosphorylates SLC9A3/NHE3 in response to dexamethasone, resulting in its activation and increased localization at the cell membrane. Phosphorylates CREB1. Necessary for vascular remodeling during angiogenesis. The protein is Serine/threonine-protein kinase Sgk1 (Sgk1) of Mus musculus (Mouse).